We begin with the raw amino-acid sequence, 282 residues long: MAYRTNAVAAINVGFFEIAGSDDGRPGLTLMIDSKLFSLRKQLQSLLIIDQGNIQITKASAKILVVIGDKSVIPNQVHYFSNLKDITFYNDVWASTTLTSYTNKEILIDQNRSNFIVTAISKHGDNQIPQKGFILSFPQATSLPVVNINDSVKLILEFIDKDGKLINLSNTASIVTGIPLLVQNGKNVVDNPKQDDPAHARTALGVCNDGTIVIVVVEHIYKQHVKDLKLVQVRSILRQEKEINVDKLIIPEALKILEKHLVNYTVIGLTKTELADYMLTWI.

This is an uncharacterized protein from Rickettsia conorii (strain ATCC VR-613 / Malish 7).